Consider the following 470-residue polypeptide: FAD-dependent monooxygenase SAT7 (470 aa).

A helical transmembrane segment spans residues 28–48 (GLSVAIVGGGIVGIALALGLV). FAD contacts are provided by E58, A71, and R143. Active-site residues include R227 and Y260. Residues D351 and A364 each coordinate FAD.

Belongs to the paxM FAD-dependent monooxygenase family. The cofactor is FAD.

It localises to the membrane. Its pathway is mycotoxin biosynthesis. In terms of biological role, FAD-dependent monooxygenase; part of the satratoxin SC1 cluster involved in the biosynthesis of satratoxins, trichothecene mycotoxins that are associated with human food poisonings. Satratoxins are suggested to be made by products of multiple gene clusters (SC1, SC2 and SC3) that encode 21 proteins in all, including polyketide synthases, acetyltransferases, and other enzymes expected to modify the trichothecene skeleton. SC1 encodes 10 proteins, SAT1 to SAT10. The largest are SAT8, which encodes a putative polyketide synthase (PKS) with a conventional non-reducing architecture, and SAT10, a putative protein containing four ankyrin repeats and thus may be involved in protein scaffolding. The putative short-chain reductase SAT3 may assist the PKS in some capacity. SAT6 contains a secretory lipase domain and acts probably as a trichothecene esterase. SAT5 encodes a putative acetyltransferase, and so, with SAT6, may affect endogenous protection from toxicity. The probable transcription factor SAT9 may regulate the expression of the SC1 cluster. SC2 encodes proteins SAT11 to SAT16, the largest of which encodes the putative reducing PKS SAT13. SAT11 is a cytochrome P450 monooxygenase, while SAT14 and SAT16 are probable acetyltransferases. The SC2 cluster may be regulated by the transcription factor SAT15. SC3 is a small cluster that encodes 5 proteins, SAT17 to SAT21. SAT21 is a putative MFS-type transporter which may have a role in exporting secondary metabolites. The four other proteins putatively encoded in SC3 include the taurine hydroxylase-like protein SAT17, the O-methyltransferase SAT18, the acetyltransferase SAT19, and the Cys6-type zinc finger SAT20, the latter being probably involved in regulation of SC3 expression. The protein is FAD-dependent monooxygenase SAT7 of Stachybotrys chartarum (strain CBS 109288 / IBT 7711) (Toxic black mold).